The following is a 122-amino-acid chain: Small ribosomal subunit protein uS13 (122 aa).

A disordered region spans residues 97–122 (PVRGQRTHTNARTRKGPAKAIAGKKK).

It belongs to the universal ribosomal protein uS13 family. In terms of assembly, part of the 30S ribosomal subunit. Forms a loose heterodimer with protein S19. Forms two bridges to the 50S subunit in the 70S ribosome.

Functionally, located at the top of the head of the 30S subunit, it contacts several helices of the 16S rRNA. In the 70S ribosome it contacts the 23S rRNA (bridge B1a) and protein L5 of the 50S subunit (bridge B1b), connecting the 2 subunits; these bridges are implicated in subunit movement. Contacts the tRNAs in the A and P-sites. The chain is Small ribosomal subunit protein uS13 from Bartonella tribocorum (strain CIP 105476 / IBS 506).